Consider the following 373-residue polypeptide: Glutamine synthetase (373 aa).

Ala-2 is modified (N-acetylalanine). Residues 2–25 are required for glutamine-induced ubiquitination by CRL4(CRBN) and proteasomal degradation; the sequence is ATSASSHLNKGIKQVYMALPQGDK. N6-acetyllysine is present on residues Lys-11 and Lys-14. One can recognise a GS beta-grasp domain in the interval 26 to 106; it reads VQAMYIWIDG…VFCEVFKYNR (81 aa). Tyr-104 carries the phosphotyrosine modification. Positions 113 to 373 constitute a GS catalytic domain; sequence LRHTCKRIMD…TGDEPFQYKN (261 aa). Glu-134 lines the ATP pocket. Mn(2+)-binding residues include Glu-134, Glu-136, Glu-196, and Glu-203. Residue 203–208 coordinates ATP; the sequence is EFQIGP. 246-247 is a binding site for L-glutamate; sequence NW. His-253 serves as a coordination point for Mn(2+). Residues 255–257, Arg-319, and Arg-324 each bind ATP; that span reads NFS. Residue Arg-319 participates in L-glutamate binding. 336–338 is a binding site for ADP; sequence YFE. Glu-338 lines the Mn(2+) pocket. Position 340 (Arg-340) interacts with L-glutamate. Ser-343 carries the phosphoserine modification.

This sequence belongs to the glutamine synthetase family. As to quaternary structure, decamer; composed of two pentamers. Interacts with PALMD. Interacts with RHOJ. Interacts with BEST2; this interaction tethers a fraction of GLUL to the membrane, causing a decrease of cytosolic glutamine synthase (GS) activity and inhibits the chloride channel activity of BEST2 by affecting the gating at the aperture in the absence of intracellular glutamate. Requires Mg(2+) as cofactor. It depends on Mn(2+) as a cofactor. In terms of processing, palmitoylated; undergoes autopalmitoylation. Acetylated by EP300/p300; acetylation is stimulated by increased glutamine levels and promotes ubiquitin-mediated proteasomal degradation. Post-translationally, ubiquitinated by ZNRF1. Ubiquitinated by the DCX (DDB1-CUL4-X-box) E3 ubiquitin-protein ligase complex called CRL4(CRBN), leading to proteasomal degradation.

The protein resides in the cytoplasm. Its subcellular location is the cytosol. The protein localises to the microsome. It localises to the mitochondrion. It is found in the cell membrane. The enzyme catalyses L-glutamate + NH4(+) + ATP = L-glutamine + ADP + phosphate + H(+). The catalysed reaction is L-cysteinyl-[protein] + hexadecanoyl-CoA = S-hexadecanoyl-L-cysteinyl-[protein] + CoA. Glutamine synthetase activity is inhibited by methionine sulfoximine (MSO). In terms of biological role, glutamine synthetase that catalyzes the ATP-dependent conversion of glutamate and ammonia to glutamine. Its role depends on tissue localization: in the brain, it regulates the levels of toxic ammonia and converts neurotoxic glutamate to harmless glutamine, whereas in the liver, it is one of the enzymes responsible for the removal of ammonia. Plays a key role in ammonium detoxification during erythropoiesis: the glutamine synthetase activity is required to remove ammonium generated by porphobilinogen deaminase (HMBS) during heme biosynthesis to prevent ammonium accumulation and oxidative stress. Essential for proliferation of fetal skin fibroblasts. Independently of its glutamine synthetase activity, required for endothelial cell migration during vascular development. Involved in angiogenesis by regulating membrane localization and activation of the GTPase RHOJ, possibly by promoting RHOJ palmitoylation. May act as a palmitoyltransferase for RHOJ: able to autopalmitoylate and then transfer the palmitoyl group to RHOJ. Plays a role in ribosomal 40S subunit biogenesis. Through the interaction with BEST2, inhibits BEST2 channel activity by affecting the gating at the aperture in the absence of intracellular L-glutamate, but sensitizes BEST2 to intracellular L-glutamate, which promotes the opening of BEST2 and thus relieves its inhibitory effect on BEST2. The sequence is that of Glutamine synthetase from Bos taurus (Bovine).